Reading from the N-terminus, the 118-residue chain is C-type natriuretic peptide 2 (118 aa).

The signal sequence occupies residues 1-22 (MHFCHIVGWGLVLAVLYLRTEA). Residues 23–96 (KPVAQAHQKS…SRKIKGINKK (74 aa)) constitute a propeptide that is removed on maturation. C102 and C118 are joined by a disulfide.

It belongs to the natriuretic peptide family.

Its subcellular location is the secreted. Its function is as follows. Exhibits natriuretic and vasodepressor activity. Has a cGMP-stimulating activity. The sequence is that of C-type natriuretic peptide 2 from Aquarana catesbeiana (American bullfrog).